The chain runs to 396 residues: S-adenosylmethionine decarboxylase proenzyme (396 aa).

Catalysis depends on residues glutamate 29 and glutamate 32. Residue serine 88 is the Schiff-base intermediate with substrate; via pyruvic acid of the active site. Serine 88 carries the pyruvic acid (Ser); by autocatalysis modification. The active-site Proton donor; for catalytic activity is cysteine 102. Catalysis depends on proton acceptor; for processing activity residues serine 287 and histidine 301.

This sequence belongs to the eukaryotic AdoMetDC family. Pyruvate is required as a cofactor. In terms of processing, is synthesized initially as an inactive proenzyme. Formation of the active enzyme involves a self-maturation process in which the active site pyruvoyl group is generated from an internal serine residue via an autocatalytic post-translational modification. Two non-identical subunits are generated from the proenzyme in this reaction, and the pyruvate is formed at the N-terminus of the alpha chain, which is derived from the carboxyl end of the proenzyme. The post-translation cleavage follows an unusual pathway, termed non-hydrolytic serinolysis, in which the side chain hydroxyl group of the serine supplies its oxygen atom to form the C-terminus of the beta chain, while the remainder of the serine residue undergoes an oxidative deamination to produce ammonia and the pyruvoyl group blocking the N-terminus of the alpha chain.

The enzyme catalyses S-adenosyl-L-methionine + H(+) = S-adenosyl 3-(methylsulfanyl)propylamine + CO2. The protein operates within amine and polyamine biosynthesis; S-adenosylmethioninamine biosynthesis; S-adenosylmethioninamine from S-adenosyl-L-methionine: step 1/1. Functionally, catalyzes the decarboxylation of S-adenosylmethionine, a key step in the biosynthetic pathway for spermidine and spermine. It is essential for normal growth, sporulation, and maintenance of ds-RNA virus. The chain is S-adenosylmethionine decarboxylase proenzyme (SPE2) from Saccharomyces cerevisiae (strain ATCC 204508 / S288c) (Baker's yeast).